We begin with the raw amino-acid sequence, 427 residues long: Serine--tRNA ligase (427 aa).

236–238 (TAE) serves as a coordination point for L-serine. An ATP-binding site is contributed by 267 to 269 (RSE). Residue Glu290 participates in L-serine binding. Residue 354-357 (EISS) coordinates ATP. Ser388 contributes to the L-serine binding site.

It belongs to the class-II aminoacyl-tRNA synthetase family. Type-1 seryl-tRNA synthetase subfamily. Homodimer. The tRNA molecule binds across the dimer.

Its subcellular location is the cytoplasm. The enzyme catalyses tRNA(Ser) + L-serine + ATP = L-seryl-tRNA(Ser) + AMP + diphosphate + H(+). The catalysed reaction is tRNA(Sec) + L-serine + ATP = L-seryl-tRNA(Sec) + AMP + diphosphate + H(+). It functions in the pathway aminoacyl-tRNA biosynthesis; selenocysteinyl-tRNA(Sec) biosynthesis; L-seryl-tRNA(Sec) from L-serine and tRNA(Sec): step 1/1. Its function is as follows. Catalyzes the attachment of serine to tRNA(Ser). Is also able to aminoacylate tRNA(Sec) with serine, to form the misacylated tRNA L-seryl-tRNA(Sec), which will be further converted into selenocysteinyl-tRNA(Sec). The sequence is that of Serine--tRNA ligase from Psychrobacter arcticus (strain DSM 17307 / VKM B-2377 / 273-4).